A 133-amino-acid chain; its full sequence is uncharacterized protein (133 aa).

The region spanning M1–I130 is the FAS1 domain.

This is an uncharacterized protein from Synechocystis sp. (strain ATCC 27184 / PCC 6803 / Kazusa).